The following is a 59-amino-acid chain: Small ribosomal subunit protein bS21 (59 aa).

Positions 32–42 (VRKREHYDKPS) are enriched in basic and acidic residues. Residues 32 to 59 (VRKREHYDKPSVKRKKKAEAARRKNAKK) form a disordered region. Basic residues predominate over residues 43-59 (VKRKKKAEAARRKNAKK).

Belongs to the bacterial ribosomal protein bS21 family.

This chain is Small ribosomal subunit protein bS21, found in Clostridioides difficile (strain 630) (Peptoclostridium difficile).